The primary structure comprises 540 residues: MSNMSQDDVTTGLRTVQQGLEALREEHSTISNTLETSVKGVKEDEAPLPKQKLSQINDNLDKLVCGVDETSLMLMVFQLTQGMDAQHQKYQAQRRRLCQENAWLRDELSSTQIKLQQSEQMVAQLEEENKHLKYMASIKQFDDGTQSDTKTSVDVGPQPVTNETLQELGFGPEDEEDMNASQFNQPTPANQMAASANVGYEIPARLRTLHNLVIQYASQGRYEVAVPLCKQALEDLEKTSGHDHPDVATMLNILALVYRDQNKYKEAANLLNEALSIREKCLGESHPAVAATLNNLAVLFGKRGKFKDAEPLCKRALEIREKVLGDDHPDVAKQLNNLALLCQNQGKYEEVEKYYKRALEIYESKLGPDDPNVAKTKNNLSSAYLKQGKYKEAEELYKQILTRAHEREFGQISGENKPIWQIAEEREENKHKGEGATANEQAGWAKAAKVDSPTVTTTLKNLGALYRRQGKYEAAETLEDVALRAKKQHEPLRSGAMGGIDEMSQSMMASTIGGSRNSMTTSTSQTGLKNKLMNALGFNS.

Residues 34 to 138 (LETSVKGVKE…NKHLKYMASI (105 aa)) adopt a coiled-coil conformation. TPR repeat units lie at residues 206–239 (LRTLHNLVIQYASQGRYEVAVPLCKQALEDLEKT), 248–281 (ATMLNILALVYRDQNKYKEAANLLNEALSIREKC), 290–323 (AATLNNLAVLFGKRGKFKDAEPLCKRALEIREKV), 332–365 (AKQLNNLALLCQNQGKYEEVEKYYKRALEIYESK), 374–407 (AKTKNNLSSAYLKQGKYKEAEELYKQILTRAHER), and 456–489 (TTTLKNLGALYRRQGKYEAAETLEDVALRAKKQH).

The protein belongs to the kinesin light chain family. As to quaternary structure, oligomeric complex composed of two heavy chains and two light chains. Interacts with unc-83; the interaction is direct. Interacts with unc-33; the interaction regulates unc-33 neurite localization. Interacts with casy-1.

Its subcellular location is the cytoplasm. The protein localises to the cytoskeleton. It is found in the nucleus envelope. Functionally, kinesin is a microtubule-associated force-producing protein that may play a role in organelle transport. The light chain may function in coupling of cargo to the heavy chain or in the modulation of its ATPase activity. Recruits unc-83 (within the unc-83-unc-84 LINC complex) to the nuclear envelope during nuclear migration to mediate the link between the nuclear envelope and the microtubule cytoskeleton in hypodermal precursor cells. This chain is Kinesin light chain, found in Caenorhabditis elegans.